The chain runs to 474 residues: MANAVGKITQVIGAVVDVQFADHLPEILNALETNNNGNRLVLEVAQHLGENTVRAIAMDATEGLVRGQTVTDTDGPISIPVGNATLGRIMNVVGEPIDEKGPVATDETRSIHQEAPAFAEQSTSSEVLETGIKVIDLLAPYAKGGKIGLFGGAGVGKTVLIMELINNIAKVHSGFSVFAGVGERTREGNDLYHEMIESSVIVPDNLTESKVALVYGQMNEPPGARMRVALTGLTLAEQFRDQSGTDVLFFVDNIFRFTQAGSEVSALLGRIPSAVGYQPTLATDMGAMQERITSTKAGSITSVQAVYVPADDLTDPAPATSFAHLDATTVLSRAISELGIYPAVDPLDSTSRLMDPQVLGEEHYNVARDVQGILQRYKSLQDIIAILGMDELSEEDKLTVARARKIQRFLSQPFDVAKVFTGSDGKQVPLAETIESFKAVVAGEYDHLPEGAFYMVGGIEEVKAKAEQMAADAA.

Gly151 to Thr158 lines the ATP pocket.

It belongs to the ATPase alpha/beta chains family. As to quaternary structure, F-type ATPases have 2 components, CF(1) - the catalytic core - and CF(0) - the membrane proton channel. CF(1) has five subunits: alpha(3), beta(3), gamma(1), delta(1), epsilon(1). CF(0) has four main subunits: a(1), b(1), b'(1) and c(9-12).

Its subcellular location is the cell inner membrane. It catalyses the reaction ATP + H2O + 4 H(+)(in) = ADP + phosphate + 5 H(+)(out). In terms of biological role, produces ATP from ADP in the presence of a proton gradient across the membrane. The catalytic sites are hosted primarily by the beta subunits. This is ATP synthase subunit beta from Roseobacter denitrificans (strain ATCC 33942 / OCh 114) (Erythrobacter sp. (strain OCh 114)).